Consider the following 480-residue polypeptide: Ribulose bisphosphate carboxylase large chain (480 aa).

Positions 1-2 (MS) are excised as a propeptide. Proline 3 is subject to N-acetylproline. Lysine 14 carries the N6,N6,N6-trimethyllysine modification. Substrate is bound by residues asparagine 123 and threonine 173. Lysine 175 acts as the Proton acceptor in catalysis. Lysine 177 is a substrate binding site. Mg(2+)-binding residues include lysine 201, aspartate 203, and glutamate 204. At lysine 201 the chain carries N6-carboxylysine. The Proton acceptor role is filled by histidine 294. Substrate-binding residues include arginine 295, histidine 327, and serine 379.

Belongs to the RuBisCO large chain family. Type I subfamily. Heterohexadecamer of 8 large chains and 8 small chains; disulfide-linked. The disulfide link is formed within the large subunit homodimers. Mg(2+) serves as cofactor. Post-translationally, the disulfide bond which can form in the large chain dimeric partners within the hexadecamer appears to be associated with oxidative stress and protein turnover.

The protein localises to the plastid. The protein resides in the chloroplast. It catalyses the reaction 2 (2R)-3-phosphoglycerate + 2 H(+) = D-ribulose 1,5-bisphosphate + CO2 + H2O. The catalysed reaction is D-ribulose 1,5-bisphosphate + O2 = 2-phosphoglycolate + (2R)-3-phosphoglycerate + 2 H(+). In terms of biological role, ruBisCO catalyzes two reactions: the carboxylation of D-ribulose 1,5-bisphosphate, the primary event in carbon dioxide fixation, as well as the oxidative fragmentation of the pentose substrate in the photorespiration process. Both reactions occur simultaneously and in competition at the same active site. The polypeptide is Ribulose bisphosphate carboxylase large chain (Mollugo verticillata (Green carpetweed)).